The sequence spans 126 residues: Small ribosomal subunit protein uS13c (126 aa).

The tract at residues 100–126 (GQRTRTNARTRRGARQTVAGKKKAPSK) is disordered. Over residues 101-126 (QRTRTNARTRRGARQTVAGKKKAPSK) the composition is skewed to basic residues.

The protein belongs to the universal ribosomal protein uS13 family. Part of the 30S ribosomal subunit.

The protein localises to the plastid. Its subcellular location is the cyanelle. Located at the top of the head of the 30S subunit, it contacts several helices of the 16S rRNA. The protein is Small ribosomal subunit protein uS13c of Cyanophora paradoxa.